We begin with the raw amino-acid sequence, 438 residues long: MQTQEEASNPLERNIELSVSREKVEAEVGQRLKRLAPKIKIQGFRPGKVPMKIVAQQYGHQIEHEVLGELLQQQFSESINRENYRIAGVPNFESRNPGTDNSNYEFRATFEIYPNIELGDLNSITINKPVLQIGDVEIQKTLEVLRKQRTNYESVDRPAQTGDRVNINYQGSLDGKNFAGGQADNYSVILGNGHLLEDFEASILGMSTGQEKTFDMTFPEDYSGKEVAGKKVTFTITLNKVEAPKLPDVDGEFAKSLGIEDGNVEKMQSEIKANLQRETTQRIRVKLKEQVMQSLLDKISVDIPKILVQQEIDRLIEEVQDTRTARGFPKASNLQRDTFLERAERRVRLGLILSRLIETHGLGVKPEQIKSFIEEHAQSYENPEQVIKWHFASPERIKEIEPLVLEDNAVSWILDRANIVDQNVTFDELMGYSHAANT.

The PPIase FKBP-type domain maps to 162 to 247; sequence GDRVNINYQG…LNKVEAPKLP (86 aa).

It belongs to the FKBP-type PPIase family. Tig subfamily.

Its subcellular location is the cytoplasm. The catalysed reaction is [protein]-peptidylproline (omega=180) = [protein]-peptidylproline (omega=0). Involved in protein export. Acts as a chaperone by maintaining the newly synthesized protein in an open conformation. Functions as a peptidyl-prolyl cis-trans isomerase. The protein is Trigger factor of Nitrosomonas eutropha (strain DSM 101675 / C91 / Nm57).